The primary structure comprises 926 residues: ABC transporter A family member 6 (926 aa).

6 helical membrane-spanning segments follow: residues 34–54 (LIVI…VFDS), 336–356 (ASLI…PVIL), 389–409 (FLAI…AIGL), 418–438 (TIQF…AFLV), 451–471 (VAYI…QFLI), and 525–545 (DEVF…TYYI). The region spanning 610 to 847 (IVCDNLKKVY…YGGSYVLTIT (238 aa)) is the ABC transporter domain. ATP is bound at residue 648–655 (GPNGAGKT).

The protein belongs to the ABC transporter superfamily. ABCA family. CPR flippase (TC 3.A.1.211) subfamily.

Its subcellular location is the membrane. This Arabidopsis thaliana (Mouse-ear cress) protein is ABC transporter A family member 6 (ABCA6).